Here is a 281-residue protein sequence, read N- to C-terminus: NADPH-dependent 7-cyano-7-deazaguanine reductase (281 aa).

88–90 (IES) is a substrate binding site. Residue 90-91 (SK) participates in NADPH binding. Cys189 serves as the catalytic Thioimide intermediate. The active-site Proton donor is the Asp196. 228-229 (HE) provides a ligand contact to substrate. 257–258 (RG) provides a ligand contact to NADPH.

The protein belongs to the GTP cyclohydrolase I family. QueF type 2 subfamily. Homodimer.

It localises to the cytoplasm. The enzyme catalyses 7-aminomethyl-7-carbaguanine + 2 NADP(+) = 7-cyano-7-deazaguanine + 2 NADPH + 3 H(+). The protein operates within tRNA modification; tRNA-queuosine biosynthesis. Functionally, catalyzes the NADPH-dependent reduction of 7-cyano-7-deazaguanine (preQ0) to 7-aminomethyl-7-deazaguanine (preQ1). The chain is NADPH-dependent 7-cyano-7-deazaguanine reductase from Proteus mirabilis (strain HI4320).